A 472-amino-acid chain; its full sequence is 3-isopropylmalate dehydratase large subunit (472 aa).

Residues Cys-353, Cys-414, and Cys-417 each coordinate [4Fe-4S] cluster.

The protein belongs to the aconitase/IPM isomerase family. LeuC type 1 subfamily. In terms of assembly, heterodimer of LeuC and LeuD. [4Fe-4S] cluster is required as a cofactor.

It catalyses the reaction (2R,3S)-3-isopropylmalate = (2S)-2-isopropylmalate. It functions in the pathway amino-acid biosynthesis; L-leucine biosynthesis; L-leucine from 3-methyl-2-oxobutanoate: step 2/4. Its function is as follows. Catalyzes the isomerization between 2-isopropylmalate and 3-isopropylmalate, via the formation of 2-isopropylmaleate. The protein is 3-isopropylmalate dehydratase large subunit of Acinetobacter baumannii (strain AB307-0294).